The chain runs to 237 residues: Ribosomal RNA small subunit methyltransferase G (237 aa).

Residues Gly-78, Phe-83, Ala-129 to Glu-130, and Arg-148 contribute to the S-adenosyl-L-methionine site. A disordered region spans residues Ser-216–Leu-237.

This sequence belongs to the methyltransferase superfamily. RNA methyltransferase RsmG family.

Its subcellular location is the cytoplasm. Functionally, specifically methylates the N7 position of a guanine in 16S rRNA. The polypeptide is Ribosomal RNA small subunit methyltransferase G (Streptococcus agalactiae serotype III (strain NEM316)).